The sequence spans 2809 residues: Fibrillin-3 (2809 aa).

The first 31 residues, 1 to 31, serve as a signal peptide directing secretion; the sequence is MTLEGLYLARGPLARLLLAWSALLCMAGGQG. Residues 32-48 constitute a propeptide that is removed on maturation; it reads RWDGALEAAGPGRVRRR. The region spanning 147-179 is the EGF-like 1 domain; sequence GQPICDRGCHNGGRCIGPNRCACVYGFMGPQCE. 3 disulfide bridges follow: C151-C161, C155-C167, and C169-C178. The 53-residue stretch at 185–237 folds into the TB 1 domain; it reads GPCFGQVGPEGCQHQLTGLVCTKALCCATVGRAWGLPCELCPAQPHPCRRGFI. The 42-residue stretch at 247–288 folds into the EGF-like 2; calcium-binding domain; it reads DVDECQAVPGLCQGGSCVNMVGSFHCRCPVGHRLSDSSAACE. Disulfide bonds link C251–C263, C258–C272, and C274–C287. One can recognise a TB 2 domain in the interval 293 to 346; that stretch reads GACFSVLFGGRCAGDLAGHYTRRQCCCDRGRCWAAGPVPELCPPRGSNEFQQLC. A glycan (N-linked (GlcNAc...) asparagine) is linked at N406. The EGF-like 3 domain maps to 408-448; the sequence is TIDICRHFTNLCLNGRCLPTPSSYRCECNVGYTQDVRGECI. Cystine bridges form between C412/C424, C419/C433, C435/C447, C453/C463, C458/C472, C474/C487, C493/C505, C500/C514, C516/C529, C535/C546, C541/C555, C557/C570, C576/C587, C582/C596, and C598/C611. An EGF-like 4; calcium-binding domain is found at 449–488; that stretch reads DVDECTSSPCHHGDCVNIPGTYHCRCYPGFQATPTRQACV. The 42-residue stretch at 489-530 folds into the EGF-like 5; calcium-binding domain; the sequence is DVDECIVSGGLCHLGRCVNTEGSFQCVCNAGFELSPDGKNCV. The region spanning 531–571 is the EGF-like 6; calcium-binding domain; that stretch reads DHNECATSTMCVNGVCLNEDGSFSCLCKPGFLLAPGGHYCM. In terms of domain architecture, EGF-like 7; calcium-binding spans 572–612; sequence DIDECQTPGICVNGHCTNTEGSFRCQCLGGLAVGTDGRVCV. In terms of domain architecture, TB 3 spans 618 to 670; that stretch reads STCYGAIEKGSCARPFPGTVTKSECCCANPDHGFGEPCQLCPAKDSAEFQALC. Positions 682 to 723 constitute an EGF-like 8; calcium-binding domain; the sequence is DINECALDPEVCANGVCENLRGSYRCVCNLGYEAGASGKDCT. 9 cysteine pairs are disulfide-bonded: C686-C698, C693-C707, C709-C722, C728-C740, C735-C749, C751-C764, C770-C780, C775-C789, and C791-C804. Residues 724-765 enclose the EGF-like 9; calcium-binding domain; sequence DVDECALNSLLCDNGWCQNSPGSYSCSCPPGFHFWQDTEICK. The region spanning 766–805 is the EGF-like 10; calcium-binding domain; sequence DVDECLSSPCVSGVCRNLAGSYTCKCGPGSRLDPSGTFCL. The 52-residue stretch at 810–861 folds into the TB 4 domain; it reads GTCWLKIQESRCEVNLQGASLRSECCATLGAAWGSPCERCEIDPACARGFAR. The region spanning 869–910 is the EGF-like 11; calcium-binding domain; the sequence is DVNECESFPGVCPNGRCVNTAGSFRCECPEGLMLDASGRLCV. 3 cysteine pairs are disulfide-bonded: C873–C885, C880–C894, and C896–C909. The TB 5 domain occupies 915 to 966; the sequence is EPCFLRWDEDECGVTLPGKYRMDVCCCSIGAVWGVECEACPDPESLEFASLC. In terms of domain architecture, EGF-like 12; calcium-binding spans 986-1027; that stretch reads DVNECKVFPGLCTHGTCRNTVGSFHCACAGGFALDAQERNCT. 36 disulfides stabilise this stretch: C990/C1002, C997/C1011, C1013/C1026, C1032/C1044, C1039/C1053, C1055/C1069, C1075/C1087, C1082/C1096, C1098/C1111, C1117/C1129, C1124/C1138, C1140/C1153, C1159/C1170, C1166/C1179, C1181/C1194, C1200/C1212, C1207/C1221, C1223/C1236, C1242/C1254, C1249/C1263, C1265/C1278, C1284/C1297, C1291/C1306, C1308/C1319, C1325/C1338, C1332/C1347, C1349/C1360, C1366/C1378, C1373/C1387, C1389/C1402, C1408/C1419, C1414/C1428, C1430/C1443, C1449/C1460, C1455/C1469, and C1471/C1484. N1025 carries an N-linked (GlcNAc...) asparagine glycan. Residues 1028 to 1070 form the EGF-like 13; calcium-binding domain; the sequence is DIDECRISPDLCGQGTCVNTPGSFECECFPGYESGFMLMKNCM. The EGF-like 14; calcium-binding domain maps to 1071–1112; the sequence is DVDECARDPLLCRGGTCTNTDGSYKCQCPPGHELTAKGTACE. An EGF-like 15; calcium-binding domain is found at 1113-1154; it reads DIDECSLSDGLCPHGQCVNVIGAFQCSCHAGFQSTPDRQGCV. The EGF-like 16; calcium-binding domain maps to 1155–1195; it reads DINECRVQNGGCDVHCINTEGSYRCSCGQGYSLMPDGRACA. Positions 1196–1237 constitute an EGF-like 17 domain; the sequence is DVDECEENPRVCDQGHCTNMPGGHRCLCYDGFMATPDMRTCV. The EGF-like 18; calcium-binding domain occupies 1238–1279; it reads DVDECDLNPHICLHGDCENTKGSFVCHCQLGYMVRKGATGCS. An EGF-like 19; calcium-binding domain is found at 1280-1320; sequence DVDECEVGGHNCDSHASCLNIPGSFSCRCLPGWVGDGFECH. The region spanning 1321-1361 is the EGF-like 20; calcium-binding domain; sequence DLDECVSQEHRCSPRGDCLNVPGSYRCTCRQGFAGDGFFCE. The region spanning 1362-1403 is the EGF-like 21; calcium-binding domain; it reads DRDECAENVDLCDNGQCLNAPGGYRCECEMGFDPTEDHRACQ. The EGF-like 22; calcium-binding domain occupies 1404–1444; sequence DVDECAQGNLCAFGSCENLPGMFRCICNGGYELDRGGGNCT. A glycan (N-linked (GlcNAc...) asparagine) is linked at N1442. The 41-residue stretch at 1445-1485 folds into the EGF-like 23; calcium-binding domain; that stretch reads DINECADPVNCINGVCINTPGSYLCSCPQDFELNPSGVGCV. A TB 6 domain is found at 1490-1546; the sequence is GNCFLETHDRGDSGISCSAEIGVGVTRASCCCSLGRAWGNPCELCPMANTTEYRTLC. N1538 carries an N-linked (GlcNAc...) asparagine glycan. The 42-residue stretch at 1563 to 1604 folds into the EGF-like 24; calcium-binding domain; the sequence is DIDECQELPGLCQGGDCVNTFGSFQCECPPGYHLSEHTRICE. 6 disulfide bridges follow: C1567-C1579, C1574-C1588, C1590-C1603, C1609-C1621, C1616-C1630, and C1632-C1645. The EGF-like 25; calcium-binding domain maps to 1605–1646; it reads DIDECSTHSGICGPGTCYNTLGNYTCVCPAEYLQVNGGNNCM. N1627 carries N-linked (GlcNAc...) asparagine glycosylation. The 53-residue stretch at 1651 to 1703 folds into the TB 7 domain; sequence SVCFRHYNGTCQNELAFNVTRKMCCCSYNIGQAWNRPCEACPTPISPDYQILC. 2 N-linked (GlcNAc...) asparagine glycosylation sites follow: N1658 and N1668. The EGF-like 26; calcium-binding domain occupies 1721–1762; sequence DIDECGEIPAICANGICINQIGSFRCECPAGFNYNSILLACE. Disulfide bonds link C1725/C1737, C1732/C1746, C1748/C1761, C1767/C1780, C1774/C1789, C1791/C1803, C1809/C1821, C1816/C1830, C1832/C1845, C1851/C1861, C1856/C1870, C1872/C1884, C1890/C1903, C1898/C1912, C1914/C1927, C1933/C1945, C1940/C1954, C1956/C1967, C1973/C1985, C1980/C1994, and C1996/C2009. Residues 1763–1804 enclose the EGF-like 27; calcium-binding domain; it reads DVDECGSRESPCQQNADCINIPGSYRCKCTRGYKLSPGGACV. Residues 1805-1846 form the EGF-like 28 domain; that stretch reads GRNECREIPNVCSHGDCMDTEGSYMCLCHRGFQASADQTLCM. In terms of domain architecture, EGF-like 29; calcium-binding spans 1847-1885; it reads DIDECDRQPCGNGTCKNIIGSYNCLCFPGFVVTHNGDCV. Residue N1858 is glycosylated (N-linked (GlcNAc...) asparagine). One can recognise an EGF-like 30; calcium-binding domain in the interval 1886-1928; it reads DFDECTTLVGQVCRFGHCLNTAGSFHCLCQDGFELTADGKNCV. Residues 1929–1968 enclose the EGF-like 31; calcium-binding domain; it reads DTNECLSLAGTCLPGTCQNLEGSFRCICPPGFQVQSDHCI. One can recognise an EGF-like 32; calcium-binding domain in the interval 1969-2010; that stretch reads DIDECSEEPNLCLFGTCTNSPGSFQCLCPPGFVLSDNGHRCF. One can recognise a TB 8 domain in the interval 2015–2068; sequence SFCFTRFEAGKCSVPKAFNTTKTRCCCSKRPGEGWGDPCELCPQEGSAAFQELC. N2033 carries N-linked (GlcNAc...) asparagine glycosylation. Positions 2084–2125 constitute an EGF-like 33; calcium-binding domain; the sequence is DVNECAENPGVCTNGVCVNTDGSFRCECPFGYSLDFTGINCV. Cystine bridges form between C2088–C2100, C2095–C2109, C2111–C2124, C2130–C2141, C2136–C2150, C2152–C2164, C2170–C2181, C2177–C2190, C2192–C2205, C2211–C2225, C2218–C2234, C2236–C2250, C2256–C2268, C2263–C2277, and C2279–C2292. One can recognise an EGF-like 34; calcium-binding domain in the interval 2126 to 2165; that stretch reads DTDECSVGHPCGQGTCTNVIGGFECACADGFEPGLMMTCE. One can recognise an EGF-like 35; calcium-binding domain in the interval 2166–2206; the sequence is DIDECSLNPLLCAFRCHNTEGSYLCTCPAGYTLREDGAMCR. An EGF-like 36; calcium-binding domain is found at 2207–2251; sequence DVDECADGQQDCHARGMECKNLIGTFACVCPPGMRPLPGSGEGCT. One can recognise an EGF-like 37; calcium-binding domain in the interval 2252 to 2293; that stretch reads DDNECHAQPDLCVNGRCVNTAGSFRCDCDEGFQPSPTLTECH. Positions 2298-2351 constitute a TB 9 domain; it reads GPCFAEVLQTMCRSLSSSSEAVTRAECCCGGGRGWGPRCELCPLPGTSAYRKLC. Residues 2363-2404 form the EGF-like 38; calcium-binding domain; the sequence is DVDECRMLAHLCAHGECINSLGSFRCHCQAGYTPDATATTCL. Disulfide bonds link C2367–C2379, C2374–C2388, C2390–C2403, C2409–C2420, C2416–C2429, C2431–C2444, C2450–C2461, C2457–C2470, C2472–C2483, C2489–C2502, C2496–C2511, C2513–C2526, C2532–C2542, C2538–C2551, C2553–C2566, C2572–C2584, C2579–C2593, C2595–C2608, C2614–C2625, C2621–C2634, and C2636–C2648. In terms of domain architecture, EGF-like 39; calcium-binding spans 2405–2445; it reads DMDECSQVPKPCTFLCKNTKGSFLCSCPRGYLLEEDGRTCK. The EGF-like 40; calcium-binding domain maps to 2446 to 2484; sequence DLDECTSRQHNCQFLCVNTVGAFTCRCPPGFTQHHQACF. An EGF-like 41; calcium-binding domain is found at 2485–2527; sequence DNDECSAQPGPCGAHGHCHNTPGSFRCECHQGFTLVSSGHGCE. In terms of domain architecture, EGF-like 42; calcium-binding spans 2528–2567; sequence DVNECDGPHRCQHGCQNQLGGYRCSCPQGFTQHSQWAQCV. The region spanning 2568–2609 is the EGF-like 43; calcium-binding domain; it reads DENECALSPPTCGSASCRNTLGGFRCVCPSGFDFDQALGGCQ. An EGF-like 44; calcium-binding domain is found at 2610-2649; that stretch reads EVDECAGRRGPCSYSCANTPGGFLCGCPQGYFRAGQGHCV. N2713 carries an N-linked (GlcNAc...) asparagine glycan.

Belongs to the fibrillin family. Probably forms intermolecular disulfide bonds either with other FBN3 molecules or with other components of the microfibrils. As to expression, predominantly expressed in connective tissues such as skeletal muscle, tendon, skin, perichondrium and periosteum. Highly expressed in fetal lung, brain, kidney. Expressed at low level in prostate, testis, mammary gland, uterus, ovary, placenta, bladder, adrenal gland, thyroid, fetal thymus, fetal liver, liver, fetal heart and heart.

It is found in the secreted. The protein localises to the extracellular space. Its subcellular location is the extracellular matrix. Its function is as follows. Fibrillins are structural components of 10-12 nm extracellular calcium-binding microfibrils, which occur either in association with elastin or in elastin-free bundles. Fibrillin-containing microfibrils provide long-term force bearing structural support. The chain is Fibrillin-3 (FBN3) from Homo sapiens (Human).